The following is a 108-amino-acid chain: Thiosulfate sulfurtransferase GlpE (108 aa).

Positions 17 to 105 (VSQSAILVDV…WLREFPQAIT (89 aa)) constitute a Rhodanese domain. The Cysteine persulfide intermediate role is filled by cysteine 65.

This sequence belongs to the GlpE family.

It is found in the cytoplasm. It catalyses the reaction thiosulfate + hydrogen cyanide = thiocyanate + sulfite + 2 H(+). It carries out the reaction thiosulfate + [thioredoxin]-dithiol = [thioredoxin]-disulfide + hydrogen sulfide + sulfite + 2 H(+). Functionally, transferase that catalyzes the transfer of sulfur from thiosulfate to thiophilic acceptors such as cyanide or dithiols. May function in a CysM-independent thiosulfate assimilation pathway by catalyzing the conversion of thiosulfate to sulfite, which can then be used for L-cysteine biosynthesis. This chain is Thiosulfate sulfurtransferase GlpE, found in Proteus mirabilis (strain HI4320).